The following is a 210-amino-acid chain: Cell division protein SepF (210 aa).

Composition is skewed to low complexity over residues 36–47 (QQQQTPAAVPTQ) and 59–69 (RASATTATTAS). 2 disordered regions span residues 36–69 (QQQQTPAAVPTQEESRSNRRLRNRASATTATTAS) and 182–210 (NEMSQTQPRPRVPNSGSQVWQPEQIQMIQ).

The protein belongs to the SepF family. Homodimer. Interacts with FtsZ.

It is found in the cytoplasm. Its function is as follows. Cell division protein that is part of the divisome complex and is recruited early to the Z-ring. Probably stimulates Z-ring formation, perhaps through the cross-linking of FtsZ protofilaments. Its function overlaps with FtsA. This chain is Cell division protein SepF, found in Trichodesmium erythraeum (strain IMS101).